Here is a 439-residue protein sequence, read N- to C-terminus: Glutamate-1-semialdehyde 2,1-aminomutase (439 aa).

Lys-270 carries the N6-(pyridoxal phosphate)lysine modification.

It belongs to the class-III pyridoxal-phosphate-dependent aminotransferase family. HemL subfamily. Homodimer. Pyridoxal 5'-phosphate is required as a cofactor.

It localises to the cytoplasm. The catalysed reaction is (S)-4-amino-5-oxopentanoate = 5-aminolevulinate. The protein operates within porphyrin-containing compound metabolism; protoporphyrin-IX biosynthesis; 5-aminolevulinate from L-glutamyl-tRNA(Glu): step 2/2. This Kocuria rhizophila (strain ATCC 9341 / DSM 348 / NBRC 103217 / DC2201) protein is Glutamate-1-semialdehyde 2,1-aminomutase.